The following is a 95-amino-acid chain: Sec-independent protein translocase protein TatA (95 aa).

The helical transmembrane segment at 1-21 (MGGISIWQLLIIALIVVLLFG) threads the bilayer. The span at 50 to 61 (KALEDNAADKPA) shows a compositional bias: basic and acidic residues. Residues 50 to 95 (KALEDNAADKPAADAAKVTETAKVAETAPVAETAEKKAESKGKEQA) are disordered. Positions 62-81 (ADAAKVTETAKVAETAPVAE) are enriched in low complexity. Over residues 82–95 (TAEKKAESKGKEQA) the composition is skewed to basic and acidic residues.

It belongs to the TatA/E family. The Tat system comprises two distinct complexes: a TatABC complex, containing multiple copies of TatA, TatB and TatC subunits, and a separate TatA complex, containing only TatA subunits. Substrates initially bind to the TatABC complex, which probably triggers association of the separate TatA complex to form the active translocon.

The protein resides in the cell inner membrane. In terms of biological role, part of the twin-arginine translocation (Tat) system that transports large folded proteins containing a characteristic twin-arginine motif in their signal peptide across membranes. TatA could form the protein-conducting channel of the Tat system. This is Sec-independent protein translocase protein TatA from Shewanella halifaxensis (strain HAW-EB4).